Reading from the N-terminus, the 248-residue chain is 4-hydroxy-tetrahydrodipicolinate reductase (248 aa).

NAD(+) is bound at residue 13–18 (GITGRL). Arg36 lines the NADP(+) pocket. NAD(+) is bound by residues 84-86 (GTT) and 108-111 (AANF). The active-site Proton donor/acceptor is His140. His141 contributes to the (S)-2,3,4,5-tetrahydrodipicolinate binding site. Catalysis depends on Lys144, which acts as the Proton donor. 150-151 (GT) is a binding site for (S)-2,3,4,5-tetrahydrodipicolinate.

The protein belongs to the DapB family.

It is found in the cytoplasm. The enzyme catalyses (S)-2,3,4,5-tetrahydrodipicolinate + NAD(+) + H2O = (2S,4S)-4-hydroxy-2,3,4,5-tetrahydrodipicolinate + NADH + H(+). It catalyses the reaction (S)-2,3,4,5-tetrahydrodipicolinate + NADP(+) + H2O = (2S,4S)-4-hydroxy-2,3,4,5-tetrahydrodipicolinate + NADPH + H(+). It functions in the pathway amino-acid biosynthesis; L-lysine biosynthesis via DAP pathway; (S)-tetrahydrodipicolinate from L-aspartate: step 4/4. In terms of biological role, catalyzes the conversion of 4-hydroxy-tetrahydrodipicolinate (HTPA) to tetrahydrodipicolinate. This is 4-hydroxy-tetrahydrodipicolinate reductase from Gluconobacter oxydans (strain 621H) (Gluconobacter suboxydans).